A 256-amino-acid chain; its full sequence is N-glycosylase/DNA lyase (256 aa).

8-oxoguanine-binding residues include glutamine 31, serine 58, and tryptophan 69. Positions 125–184 (TLRQLSHIVGARREQKTLVFTIKILNYAYMCSRGVNRVLPFDIPIPVDYRVARLTWCAGL) are helix-hairpin-helix. Catalysis depends on lysine 140, which acts as the Schiff-base intermediate with DNA. 8-oxoguanine-binding residues include phenylalanine 144 and proline 170. Aspartate 172 is a catalytic residue. 8-oxoguanine is bound by residues aspartate 218 and tryptophan 222.

It belongs to the archaeal N-glycosylase/DNA lyase (AGOG) family.

The catalysed reaction is 2'-deoxyribonucleotide-(2'-deoxyribose 5'-phosphate)-2'-deoxyribonucleotide-DNA = a 3'-end 2'-deoxyribonucleotide-(2,3-dehydro-2,3-deoxyribose 5'-phosphate)-DNA + a 5'-end 5'-phospho-2'-deoxyribonucleoside-DNA + H(+). DNA repair enzyme that is part of the base excision repair (BER) pathway; protects from oxidative damage by removing the major product of DNA oxidation, 8-oxoguanine (GO), from single- and double-stranded DNA substrates. The polypeptide is N-glycosylase/DNA lyase (Pyrobaculum aerophilum (strain ATCC 51768 / DSM 7523 / JCM 9630 / CIP 104966 / NBRC 100827 / IM2)).